The sequence spans 424 residues: O-methyltransferase bfoD (424 aa).

An S-adenosyl-L-methionine-binding site is contributed by Asp-275. His-326 functions as the Proton acceptor in the catalytic mechanism.

The protein belongs to the class I-like SAM-binding methyltransferase superfamily. Cation-independent O-methyltransferase family.

It participates in secondary metabolite biosynthesis. Cytochrome P450 monooxygenase; part of the gene cluster that mediates the biosynthesis of bifonsecin B, a dimeric gamma-naphthopyrone. The first step in the biosynthesis of bifonsecin B is the production of gamma-naphthopyrone precursor YWA1 by the non-reducing polyketide synthase albA, via condensation of one acetyl-CoA starter unit with 6 malonyl-CoA units. YWA1 is then methylated by bfoE at position C-6 to yield foncesin which is further methylated at position C-8 by bfoD to produce fonsecin B. A key enzyme in the biosynthetic pathway is the cytochrome P450 monooxygenase bfoB which catalyzes the oxidative dimerization of fonsecin B to bifonsecin B. Bfob also catalyzes the oxidative dimerization of rubrofusarin B into nigerone. The stereoselectivity of bfoB is influenced by the two natural monomeric substrates; homodimerization of fonsecin B yields a stereochemically pure biaryl, M-foncerine B, while rubrofusarin B yields a mixture of enantiomers M- and P-nigerone. This Aspergillus brasiliensis (strain CBS 101740 / IMI 381727 / IBT 21946) protein is O-methyltransferase bfoD.